A 136-amino-acid polypeptide reads, in one-letter code: Small ribosomal subunit protein uS11 (136 aa).

The protein belongs to the universal ribosomal protein uS11 family. In terms of assembly, part of the 30S ribosomal subunit. Interacts with proteins S7 and S18. Binds to IF-3.

Its function is as follows. Located on the platform of the 30S subunit, it bridges several disparate RNA helices of the 16S rRNA. Forms part of the Shine-Dalgarno cleft in the 70S ribosome. The sequence is that of Small ribosomal subunit protein uS11 from Leptospira borgpetersenii serovar Hardjo-bovis (strain JB197).